The sequence spans 319 residues: L-threo-3-hydroxyaspartate ammonia-lyase (319 aa).

An N6-(pyridoxal phosphate)lysine modification is found at Lys53. Pyridoxal 5'-phosphate contacts are provided by residues Asn80, 179–183 (GGGGM), and Thr304.

It belongs to the serine/threonine dehydratase family. May be either a monomer or a homodimer. Pyridoxal 5'-phosphate is required as a cofactor. The cofactor is Mn(2+). Mg(2+) serves as cofactor. Requires Ca(2+) as cofactor.

The enzyme catalyses (3S)-3-hydroxy-L-aspartate = oxaloacetate + NH4(+). Is strongly inhibited by hydroxylamine and EDTA in vitro. Catalyzes the deamination of L-threo-3-hydroxyaspartate to oxaloacetate and ammonia. Shows a high specificity towards L-threo-3-hydroxyaspartate as other 3-hydroxyaminoacids, i.e. D,L-erythro- and D-threo-3-hydroxyaspartate, D-threonine, L-threonine, D,L-allothreonine, D,L-threo-3-phenylserine, D-serine, and L-serine, are not substrates for this enzyme. Exhibits no detectable serine and aspartate racemase activity. Might play a role in the detoxification of naturally occurring 3-hydroxyaspartate in Pseudomonas sp. T62 cells. This chain is L-threo-3-hydroxyaspartate ammonia-lyase, found in Pseudomonas sp.